The sequence spans 483 residues: tRNA sulfurtransferase (483 aa).

The region spanning 61-165 (PLVADALTLI…NDRLLLITER (105 aa)) is the THUMP domain. ATP-binding positions include 183–184 (LI), lysine 265, glycine 287, and glutamine 296. Cysteine 344 and cysteine 457 are joined by a disulfide. Residues 405–483 (LGSGDVVLDI…GFQNVKVYRP (79 aa)) form the Rhodanese domain. Cysteine 457 (cysteine persulfide intermediate) is an active-site residue.

This sequence belongs to the ThiI family.

The protein resides in the cytoplasm. It catalyses the reaction [ThiI sulfur-carrier protein]-S-sulfanyl-L-cysteine + a uridine in tRNA + 2 reduced [2Fe-2S]-[ferredoxin] + ATP + H(+) = [ThiI sulfur-carrier protein]-L-cysteine + a 4-thiouridine in tRNA + 2 oxidized [2Fe-2S]-[ferredoxin] + AMP + diphosphate. The catalysed reaction is [ThiS sulfur-carrier protein]-C-terminal Gly-Gly-AMP + S-sulfanyl-L-cysteinyl-[cysteine desulfurase] + AH2 = [ThiS sulfur-carrier protein]-C-terminal-Gly-aminoethanethioate + L-cysteinyl-[cysteine desulfurase] + A + AMP + 2 H(+). It functions in the pathway cofactor biosynthesis; thiamine diphosphate biosynthesis. Functionally, catalyzes the ATP-dependent transfer of a sulfur to tRNA to produce 4-thiouridine in position 8 of tRNAs, which functions as a near-UV photosensor. Also catalyzes the transfer of sulfur to the sulfur carrier protein ThiS, forming ThiS-thiocarboxylate. This is a step in the synthesis of thiazole, in the thiamine biosynthesis pathway. The sulfur is donated as persulfide by IscS. This is tRNA sulfurtransferase from Sodalis glossinidius (strain morsitans).